The sequence spans 426 residues: 3-phosphoshikimate 1-carboxyvinyltransferase (426 aa).

3 residues coordinate 3-phosphoshikimate: lysine 22, serine 23, and arginine 27. Phosphoenolpyruvate is bound at residue lysine 22. Positions 96 and 124 each coordinate phosphoenolpyruvate. Residues serine 170, serine 171, glutamine 172, serine 198, aspartate 314, asparagine 337, and lysine 341 each coordinate 3-phosphoshikimate. Glutamine 172 serves as a coordination point for phosphoenolpyruvate. The active-site Proton acceptor is aspartate 314. The phosphoenolpyruvate site is built by arginine 345, arginine 387, and lysine 412.

The protein belongs to the EPSP synthase family. As to quaternary structure, monomer.

It is found in the cytoplasm. It catalyses the reaction 3-phosphoshikimate + phosphoenolpyruvate = 5-O-(1-carboxyvinyl)-3-phosphoshikimate + phosphate. It functions in the pathway metabolic intermediate biosynthesis; chorismate biosynthesis; chorismate from D-erythrose 4-phosphate and phosphoenolpyruvate: step 6/7. Functionally, catalyzes the transfer of the enolpyruvyl moiety of phosphoenolpyruvate (PEP) to the 5-hydroxyl of shikimate-3-phosphate (S3P) to produce enolpyruvyl shikimate-3-phosphate and inorganic phosphate. In Shewanella halifaxensis (strain HAW-EB4), this protein is 3-phosphoshikimate 1-carboxyvinyltransferase.